Consider the following 152-residue polypeptide: SsrA-binding protein (152 aa).

The protein belongs to the SmpB family.

The protein localises to the cytoplasm. Required for rescue of stalled ribosomes mediated by trans-translation. Binds to transfer-messenger RNA (tmRNA), required for stable association of tmRNA with ribosomes. tmRNA and SmpB together mimic tRNA shape, replacing the anticodon stem-loop with SmpB. tmRNA is encoded by the ssrA gene; the 2 termini fold to resemble tRNA(Ala) and it encodes a 'tag peptide', a short internal open reading frame. During trans-translation Ala-aminoacylated tmRNA acts like a tRNA, entering the A-site of stalled ribosomes, displacing the stalled mRNA. The ribosome then switches to translate the ORF on the tmRNA; the nascent peptide is terminated with the 'tag peptide' encoded by the tmRNA and targeted for degradation. The ribosome is freed to recommence translation, which seems to be the essential function of trans-translation. The protein is SsrA-binding protein of Helicobacter pylori (strain Shi470).